The sequence spans 109 residues: Stress-response A/B barrel domain-containing protein HS1 (109 aa).

A Stress-response A/B barrel domain is found at 8–102 (VKHVLLASFK…SLDKVLVIDY (95 aa)). Mg(2+) contacts are provided by Val-36, Ile-39, Glu-40, and Met-42.

As to quaternary structure, homodimer. Mg(2+) serves as cofactor.

Heat stable protein involved in defense against fungal pathogens. Possesses antifungal activity against diverse pathogenic fungi. Possesses antimicrobial activity. Possesses ribonuclease activity. The sequence is that of Stress-response A/B barrel domain-containing protein HS1 from Arabidopsis thaliana (Mouse-ear cress).